Consider the following 861-residue polypeptide: Probable beta-glucosidase A (861 aa).

Positions 1–19 (MKLGWIEVAALAAASVVSA) are cleaved as a signal peptide. Residues N62, N212, and N253 are each glycosylated (N-linked (GlcNAc...) asparagine). D281 is a catalytic residue. N-linked (GlcNAc...) asparagine glycans are attached at residues N316, N323, N355, N443, N524, N543, N565, N669, and N713. The tract at residues 730 to 754 (DSKYIPEGATDGSAQPRLPASGGAG) is disordered. N846 carries an N-linked (GlcNAc...) asparagine glycan.

The protein belongs to the glycosyl hydrolase 3 family.

It is found in the secreted. It carries out the reaction Hydrolysis of terminal, non-reducing beta-D-glucosyl residues with release of beta-D-glucose.. It functions in the pathway glycan metabolism; cellulose degradation. In terms of biological role, beta-glucosidases are one of a number of cellulolytic enzymes involved in the degradation of cellulosic biomass. Catalyzes the last step releasing glucose from the inhibitory cellobiose. This Aspergillus oryzae (strain ATCC 42149 / RIB 40) (Yellow koji mold) protein is Probable beta-glucosidase A (bglA).